The following is a 363-amino-acid chain: Protein disulfide-isomerase 1 (363 aa).

A signal peptide spans Met-1–Ala-20. Thioredoxin domains follow at residues Glu-21–Lys-132 and Thr-133–Glu-285. Residues Cys-51, Cys-54, Cys-172, and Cys-175 each act as nucleophile in the active site. 2 disulfides stabilise this stretch: Cys-51–Cys-54 and Cys-172–Cys-175.

Belongs to the protein disulfide isomerase family.

It is found in the endoplasmic reticulum lumen. It carries out the reaction Catalyzes the rearrangement of -S-S- bonds in proteins.. Participates in the folding of proteins containing disulfide bonds, may be involved in glycosylation, prolyl hydroxylation and triglyceride transfer. This Dictyostelium discoideum (Social amoeba) protein is Protein disulfide-isomerase 1 (pdi1).